A 612-amino-acid polypeptide reads, in one-letter code: RNA polymerase sigma factor RpoD (612 aa).

Acidic residues predominate over residues 191–206; that stretch reads QQNNEEDEENNQEDHE. The disordered stretch occupies residues 191 to 210; the sequence is QQNNEEDEENNQEDHEDDHS. Residues 378 to 448 form a sigma-70 factor domain-2 region; sequence MVEANLRLVI…TRSIADQART (71 aa). Residues 402-405 carry the Interaction with polymerase core subunit RpoC motif; sequence DLIQ. Residues 457-533 are sigma-70 factor domain-3; that stretch reads ETINKLNRIS…DTTLELPLDS (77 aa). Residues 546–599 are sigma-70 factor domain-4; it reads VLSGLTAREAKVLRMRFGIDMNTDHTLEEVGKQFDVTRERIRQIEAKALRKLRH. Residues 572–591 constitute a DNA-binding region (H-T-H motif); sequence LEEVGKQFDVTRERIRQIEA.

Belongs to the sigma-70 factor family. RpoD/SigA subfamily. In terms of assembly, interacts transiently with the RNA polymerase catalytic core.

Its subcellular location is the cytoplasm. Its function is as follows. Sigma factors are initiation factors that promote the attachment of RNA polymerase to specific initiation sites and are then released. This sigma factor is the primary sigma factor during exponential growth. This is RNA polymerase sigma factor RpoD from Buchnera aphidicola subsp. Acyrthosiphon pisum (strain APS) (Acyrthosiphon pisum symbiotic bacterium).